The primary structure comprises 448 residues: Adenylosuccinate synthetase 1 (448 aa).

Residues G22–K28 and G50–T52 contribute to the GTP site. Catalysis depends on D23, which acts as the Proton acceptor. Residues D23 and G50 each coordinate Mg(2+). IMP contacts are provided by residues D23 to K26, N48 to H51, T139, R153, Q234, T249, and R321. H51 acts as the Proton donor in catalysis. S317–R323 contacts substrate. GTP is bound by residues R323, K349–D351, and S431–G433.

The protein belongs to the adenylosuccinate synthetase family. Homodimer. It depends on Mg(2+) as a cofactor.

It is found in the cytoplasm. It carries out the reaction IMP + L-aspartate + GTP = N(6)-(1,2-dicarboxyethyl)-AMP + GDP + phosphate + 2 H(+). It participates in purine metabolism; AMP biosynthesis via de novo pathway; AMP from IMP: step 1/2. Its function is as follows. Plays an important role in the de novo pathway of purine nucleotide biosynthesis. Catalyzes the first committed step in the biosynthesis of AMP from IMP. The protein is Adenylosuccinate synthetase 1 of Burkholderia lata (strain ATCC 17760 / DSM 23089 / LMG 22485 / NCIMB 9086 / R18194 / 383).